We begin with the raw amino-acid sequence, 718 residues long: Heat shock 70 kDa protein 6, chloroplastic (718 aa).

The N-terminal 92 residues, 1–92 (MASSAAQIHV…IDLGTTNSAV (92 aa)), are a transit peptide targeting the chloroplast. Residues 671 to 718 (QSLYNQPGAGGPGAGPSPGGEGASSGDSSSSKGGDGDDVIDADFTDSQ) form a disordered region. The segment covering 678-693 (GAGGPGAGPSPGGEGA) has biased composition (gly residues). Positions 706-718 (GDDVIDADFTDSQ) are enriched in acidic residues.

This sequence belongs to the heat shock protein 70 (TC 1.A.33) family. DnaK subfamily. In terms of assembly, interacts with geminivirus movement protein (MP).

The protein resides in the plastid. Its subcellular location is the chloroplast stroma. Its function is as follows. Acts redundantly with HSP70-7 in the thermotolerance of germinating seeds. Plays an important role in the protein precursor import into chloroplasts. In terms of biological role, in cooperation with other chaperones, Hsp70s are key components that facilitate folding of de novo synthesized proteins, assist translocation of precursor proteins into organelles, and are responsible for degradation of damaged protein under stress conditions. This chain is Heat shock 70 kDa protein 6, chloroplastic (HSP70-6), found in Arabidopsis thaliana (Mouse-ear cress).